Consider the following 622-residue polypeptide: MSKVIGIDLGTTNSCVSVYERGESKVIPNKEGKNTTPSVVAFTDKGEILVGDSAKRQAVTNPEKTIYSIKRIMGLMINEDAAKEAKNRLPYHITERNGACAIEIAGKIYTPQEISAKVLMKLKEDAEAFLGEKVEDAVITVPAYFNDAQRKATKEAGTIAGLNVLRIINEPTAAALAYGLDKKESEKIVVYDLGGGTFDVTVLETGDNVVEVLATGGNAFLGGDDFDNKLIDYLASEFKDETGIDLKNDVMALQRLKEAAENAKKELSSANETNVNLPFITADASGPKHLTKTITRAKFESMIDGLVAETISKINEVVKDAGLDKSEVKEIVMVGGSTRVPLVQEEVKKAFGKDLNKSVNPDEVVAIGAAIQGAVIKGDVKDVLLLDVTPLSLGIETLGGVMTKIIEKGTTIPTKKEQTFSTAEDNQSAVTINVLQGEREFSRDNKSLGNFNLEGIPPAPRGMPQIEVTFDIDANGILTVSAKDKATGKAQEIKITGSSGLSEEEINNMVKDAELHKEEDRKRKEAVEARNSADSLVHQVEKSLSELGEKVSDEDKANIQKALDDLKETLKNANASKEEIESKMKTLSEVSHKLAENMYKKDEKPSDDKKKKDDDVIDAEVE.

Thr-197 carries the phosphothreonine; by autocatalysis modification. Basic and acidic residues-rich tracts occupy residues 515–528 and 575–614; these read LHKEEDRKRKEAVE and ASKEEIESKMKTLSEVSHKLAENMYKKDEKPSDDKKKKDD. Disordered stretches follow at residues 515–537 and 575–622; these read LHKEEDRKRKEAVEARNSADSLV and ASKE…AEVE.

This sequence belongs to the heat shock protein 70 family.

Functionally, acts as a chaperone. This Campylobacter lari (strain RM2100 / D67 / ATCC BAA-1060) protein is Chaperone protein DnaK.